We begin with the raw amino-acid sequence, 353 residues long: sn-glycerol-3-phosphate import ATP-binding protein UgpC 3 (353 aa).

Residues Ile4–Ile235 enclose the ABC transporter domain. Residue Gly37–Ser44 participates in ATP binding.

It belongs to the ABC transporter superfamily. sn-glycerol-3-phosphate importer (TC 3.A.1.1.3) family. As to quaternary structure, the complex is composed of two ATP-binding proteins (UgpC), two transmembrane proteins (UgpA and UgpE) and a solute-binding protein (UgpB).

The protein resides in the cell inner membrane. It carries out the reaction sn-glycerol 3-phosphate(out) + ATP + H2O = sn-glycerol 3-phosphate(in) + ADP + phosphate + H(+). Functionally, part of the ABC transporter complex UgpBAEC involved in sn-glycerol-3-phosphate (G3P) import. Responsible for energy coupling to the transport system. In Agrobacterium fabrum (strain C58 / ATCC 33970) (Agrobacterium tumefaciens (strain C58)), this protein is sn-glycerol-3-phosphate import ATP-binding protein UgpC 3.